The primary structure comprises 351 residues: Protein EXPRESSION OF TERPENOIDS 1 (351 aa).

Residues 1–23 (MANFFSLGGNQEQQHQEISSSQA) are disordered. Over residues 11–22 (QEQQHQEISSSQ) the composition is skewed to low complexity. Residues C129, C132, C140, C145, C149, and C156 each contribute to the Zn(2+) site. The zn(2)-C6 fungal-type; degenerate DNA-binding region spans 129–156 (CQDCGNQAKKDCQHMRCRTCCKSRGFQC). The segment at 170-219 (RRERQQQLAALQQQQQGHNNNNNNHKNKRQREDPSASSLVSTRLPSNTNG) is disordered. The segment covering 175-193 (QQLAALQQQQQGHNNNNNN) has biased composition (low complexity). Positions 204-219 (SASSLVSTRLPSNTNG) are enriched in polar residues. The Required for homo- and heterodimerization motif lies at 258–261 (IGGH). Residues 286-320 (TSSGGSAGGVQHHHHNSAAVATATTTSGGDATAAG) form a disordered region. A compositionally biased stretch (low complexity) spans 303–320 (AAVATATTTSGGDATAAG).

The protein belongs to the SHI protein family. In terms of assembly, forms homodimers and heterodimers with LRP1.

The protein resides in the nucleus. In terms of biological role, transcription activator involved in the transcriptional regulation of terpene biosynthesis in glandular trichomes. Binds to the promoter of the linalool synthase TPS5 and promotes TPS5 gene transactivation. Acts synergistically with MYC1 in the transactivation of TPS5. In Solanum lycopersicum (Tomato), this protein is Protein EXPRESSION OF TERPENOIDS 1.